A 518-amino-acid polypeptide reads, in one-letter code: Glutamate--cysteine ligase (518 aa).

This sequence belongs to the glutamate--cysteine ligase type 1 family. Type 1 subfamily.

The enzyme catalyses L-cysteine + L-glutamate + ATP = gamma-L-glutamyl-L-cysteine + ADP + phosphate + H(+). The protein operates within sulfur metabolism; glutathione biosynthesis; glutathione from L-cysteine and L-glutamate: step 1/2. This is Glutamate--cysteine ligase from Escherichia fergusonii (strain ATCC 35469 / DSM 13698 / CCUG 18766 / IAM 14443 / JCM 21226 / LMG 7866 / NBRC 102419 / NCTC 12128 / CDC 0568-73).